We begin with the raw amino-acid sequence, 556 residues long: Phenylalanine--tRNA ligase beta subunit (556 aa).

A B5 domain is found at 278–353 (LTPKRFEVEL…IAYGYNNIEP (76 aa)). Asp-331, Asp-337, Glu-340, and Asp-341 together coordinate Mg(2+).

The protein belongs to the phenylalanyl-tRNA synthetase beta subunit family. Type 2 subfamily. Tetramer of two alpha and two beta subunits. It depends on Mg(2+) as a cofactor.

Its subcellular location is the cytoplasm. The enzyme catalyses tRNA(Phe) + L-phenylalanine + ATP = L-phenylalanyl-tRNA(Phe) + AMP + diphosphate + H(+). The chain is Phenylalanine--tRNA ligase beta subunit from Pyrococcus abyssi (strain GE5 / Orsay).